The following is a 186-amino-acid chain: Peptidyl-tRNA hydrolase (186 aa).

Tyr14 serves as a coordination point for tRNA. The active-site Proton acceptor is His19. TRNA contacts are provided by Phe64, Asn66, and Asn112.

The protein belongs to the PTH family. Monomer.

It localises to the cytoplasm. The catalysed reaction is an N-acyl-L-alpha-aminoacyl-tRNA + H2O = an N-acyl-L-amino acid + a tRNA + H(+). Hydrolyzes ribosome-free peptidyl-tRNAs (with 1 or more amino acids incorporated), which drop off the ribosome during protein synthesis, or as a result of ribosome stalling. In terms of biological role, catalyzes the release of premature peptidyl moieties from peptidyl-tRNA molecules trapped in stalled 50S ribosomal subunits, and thus maintains levels of free tRNAs and 50S ribosomes. This is Peptidyl-tRNA hydrolase from Mycoplasma mycoides subsp. mycoides SC (strain CCUG 32753 / NCTC 10114 / PG1).